The following is a 447-amino-acid chain: Protein chibby homolog 2 (447 aa).

Phosphoserine is present on residues S41, S85, S88, S96, S123, S143, S147, and S149. Positions 164–197 (EYLLQEENKSLRDENRALRDENKALRKENKILQV) form a coiled coil. Disordered stretches follow at residues 208–244 (HEESQTSSPLLHKDTTSQEVVKKDNATLPAQRSKENT) and 266–320 (WAQA…EDSK). Phosphoserine is present on residues S211 and S224. A compositionally biased stretch (basic and acidic residues) spans 218-232 (LHKDTTSQEVVKKDN). Residues 237 to 264 (AQRSKENTLQFIREENRALQQLLEQRQA) adopt a coiled-coil conformation. A compositionally biased stretch (low complexity) spans 266–276 (WAQAEESATSA). Phosphoserine occurs at positions 272 and 275. Residues 277–290 (EEGKPTSSPKEEPH) show a composition bias toward basic and acidic residues. 2 positions are modified to phosphoserine: S333 and S336. Positions 354-412 (LQLLREMNQALQALREENRLLQEENRALHAMREEHRVFQEENKALWENNKLKLQQRLVI) form a coiled coil.

This sequence belongs to the chibby family. SPERT subfamily. As to quaternary structure, homodimer. Binds to NEK1.

The sequence is that of Protein chibby homolog 2 (Cby2) from Rattus norvegicus (Rat).